The following is a 418-amino-acid chain: Probable carboxypeptidase AFLA_000940 (418 aa).

Residues 1-18 form the signal peptide; that stretch reads MKATDLFHVTVLVAGALA. N-linked (GlcNAc...) asparagine glycosylation is present at asparagine 74. A Zn(2+)-binding site is contributed by aspartate 147. Residue asparagine 168 is glycosylated (N-linked (GlcNAc...) asparagine). Residue glutamate 179 is the Proton acceptor of the active site. Glutamate 180 is a binding site for Zn(2+).

Belongs to the peptidase M20A family. The cofactor is Zn(2+).

The protein resides in the secreted. The protein is Probable carboxypeptidase AFLA_000940 of Aspergillus flavus (strain ATCC 200026 / FGSC A1120 / IAM 13836 / NRRL 3357 / JCM 12722 / SRRC 167).